The following is a 117-amino-acid chain: Basic phospholipase A2 pseudexin A chain (117 aa).

Intrachain disulfides connect Cys-11-Cys-71, Cys-27-Cys-117, Cys-29-Cys-45, Cys-44-Cys-98, Cys-51-Cys-91, Cys-60-Cys-84, and Cys-78-Cys-89. Ca(2+) contacts are provided by Tyr-28, Gly-30, and Gly-32. Residue His-48 is part of the active site. Asp-49 provides a ligand contact to Ca(2+). Asp-92 is a catalytic residue.

Belongs to the phospholipase A2 family. Group I subfamily. D49 sub-subfamily. It depends on Ca(2+) as a cofactor. As to expression, expressed by the venom gland.

It is found in the secreted. The enzyme catalyses a 1,2-diacyl-sn-glycero-3-phosphocholine + H2O = a 1-acyl-sn-glycero-3-phosphocholine + a fatty acid + H(+). Functionally, PLA2 catalyzes the calcium-dependent hydrolysis of the 2-acyl groups in 3-sn-phosphoglycerides. This Pseudechis porphyriacus (Red-bellied black snake) protein is Basic phospholipase A2 pseudexin A chain.